Consider the following 399-residue polypeptide: P2X purinoceptor 1 (399 aa).

At 1-28 (MARRLQDELSAFFFEYDTPRMVLVRNKK) the chain is on the cytoplasmic side. A helical membrane pass occupies residues 29 to 50 (VGVIFRLIQLVVLVYVIGWVFV). Residues 51-338 (YEKGYQTSSG…IPTMTTIGSG (288 aa)) lie on the Extracellular side of the membrane. Residues Lys-68, Lys-70, and Lys-140 each coordinate CTP. Lys-70 contributes to the ATP binding site. 3 disulfides stabilise this stretch: Cys-117/Cys-165, Cys-126/Cys-149, and Cys-132/Cys-159. N-linked (GlcNAc...) asparagine glycosylation is found at Asn-153 and Asn-184. CTP is bound at residue Thr-186. ATP is bound at residue Thr-186. Asn-210 is a glycosylation site (N-linked (GlcNAc...) asparagine). Cystine bridges form between Cys-217-Cys-227 and Cys-261-Cys-270. Ser-286, Asn-290, and Arg-292 together coordinate ATP. CTP is bound by residues Asn-290 and Arg-292. N-linked (GlcNAc...) asparagine glycosylation occurs at Asn-300. Lys-309 serves as a coordination point for CTP. An ATP-binding site is contributed by Lys-309. The pore-forming motif stretch occupies residues 331–338 (TMTTIGSG). The helical transmembrane segment at 339 to 358 (IGIFGVATVLCDLLLLHILP) threads the bilayer. Residues 359–399 (KRHYYKQKKFKYAEDMGPGEGERDPAATSSTLGLQENMRTS) lie on the Cytoplasmic side of the membrane. A disordered region spans residues 374–399 (MGPGEGERDPAATSSTLGLQENMRTS). The segment covering 385-399 (ATSSTLGLQENMRTS) has biased composition (polar residues). Residues Ser-387 and Ser-388 each carry the phosphoserine modification. Residue Thr-389 is modified to Phosphothreonine.

Belongs to the P2X receptor family. In terms of assembly, functional P2XRs are organized as homomeric and heteromeric trimers. Forms heterodimer with P2RX2. Forms heterodimer with P2RX4. Forms heterodimer with P2RX5. In terms of tissue distribution, expressed in smooth muscle of the bladder and arteries.

It is found in the cell membrane. It catalyses the reaction Ca(2+)(in) = Ca(2+)(out). The enzyme catalyses K(+)(in) = K(+)(out). It carries out the reaction Na(+)(in) = Na(+)(out). With respect to regulation, activated by low concentrations of ATP (&lt;1 uM). Undergoes rapid desensitisation. Sensitives to the ATP agonist:alpha/beta-methylene-ATP. Modulated by cholesterol. In terms of biological role, ATP-gated nonselective transmembrane cation channel permeable to potassium, sodium and with relatively high calcium permeability. Furthermore, CTP functions as a weak affinity agonist for P2RX1. Plays a role in male fertility, bladder contraction and platelet aggregation. Specifically, plays an important role in neurogenic contraction of smooth muscle of the vas deferens, and therefore is essential for normal male reproductive function. In addition, contributes to smooth muscle contractions of the urinary bladder. On platelets, contributes to platelet activation and aggregation and thereby, also to thrombosis. On neutrophils, it is involved in chemotaxis and in mitigating the activation of circulating cells. The polypeptide is P2X purinoceptor 1 (P2rx1) (Mus musculus (Mouse)).